The sequence spans 351 residues: CREB homolog crh-2 (351 aa).

Disordered stretches follow at residues 46–104 and 119–149; these read EPCT…EPLG and SPSATSSHSPSSYGMMHGSHSMASHQLHQQQ. Residues 82 to 95 are compositionally biased toward low complexity; it reads GSSSGSPSSSLSSP. The bZIP domain maps to 282–345; that stretch reads SLKIVRRKIK…RDLQQKLHQY (64 aa). The segment at 284 to 304 is basic motif; sequence KIVRRKIKNKLSAQESRRKRK. The interval 307–314 is leucine-zipper; the sequence is IDALEGRL.

This sequence belongs to the bZIP family.

The protein resides in the nucleus. In terms of biological role, transcription factor. Plays a role in regulating the developmentally arrested larval state known as dauer, when induced by long-term exposure to the Gram-negative bacterium P.aeruginosa PAO1, but dispensable for dauer formation induced by starvation. Involved in regulating expression of microRNA mir-243, during long-term exposure to P.aeruginosa PAO1. The chain is CREB homolog crh-2 from Caenorhabditis elegans.